The sequence spans 318 residues: Dual specificity protein phosphatase 2 (318 aa).

Residues 27 to 148 form the Rhodanese domain; sequence EAERTLLLDC…FQTYCPDLCS (122 aa). The Tyrosine-protein phosphatase domain occupies 176 to 317; sequence GPVEILPYLY…LLQLETQVLC (142 aa). Cys261 acts as the Phosphocysteine intermediate in catalysis.

Belongs to the protein-tyrosine phosphatase family. Non-receptor class dual specificity subfamily. As to quaternary structure, interacts with MAPK14; this interaction does not lead to catalytic activation of DUSP2 and dephosphrylation of MAPK14. In hematopoietic tissues such as spleen and thymus.

Its subcellular location is the nucleus. The catalysed reaction is O-phospho-L-tyrosyl-[protein] + H2O = L-tyrosyl-[protein] + phosphate. It catalyses the reaction O-phospho-L-threonyl-[protein] + H2O = L-threonyl-[protein] + phosphate. In terms of biological role, dephosphorylates both phosphorylated Thr and Tyr residues in MAPK1, and dephosphorylation of phosphotyrosine is slightly faster than that of phosphothreonine. Can dephosphorylate MAPK1. The protein is Dual specificity protein phosphatase 2 of Mus musculus (Mouse).